Here is a 307-residue protein sequence, read N- to C-terminus: UDP-N-acetylenolpyruvoylglucosamine reductase (307 aa).

One can recognise an FAD-binding PCMH-type domain in the interval 33 to 197; that stretch reads TGGNADFYIT…LEAAFTLAPG (165 aa). The active site involves R176. S226 serves as the catalytic Proton donor. E296 is an active-site residue.

This sequence belongs to the MurB family. The cofactor is FAD.

The protein localises to the cytoplasm. The catalysed reaction is UDP-N-acetyl-alpha-D-muramate + NADP(+) = UDP-N-acetyl-3-O-(1-carboxyvinyl)-alpha-D-glucosamine + NADPH + H(+). It functions in the pathway cell wall biogenesis; peptidoglycan biosynthesis. Cell wall formation. The polypeptide is UDP-N-acetylenolpyruvoylglucosamine reductase (Staphylococcus aureus (strain Mu3 / ATCC 700698)).